The following is a 259-amino-acid chain: UPF0246 protein SG0407 (259 aa).

The protein belongs to the UPF0246 family.

The chain is UPF0246 protein SG0407 from Sodalis glossinidius (strain morsitans).